The sequence spans 303 residues: Cobalamin biosynthesis protein CobD (303 aa).

Transmembrane regions (helical) follow at residues 65–85 (LLAW…IVLL), 147–167 (DAVF…VVLY), 235–255 (AGPV…GAAI), and 283–303 (LVWA…WLYA).

This sequence belongs to the CobD/CbiB family.

It is found in the cell membrane. It participates in cofactor biosynthesis; adenosylcobalamin biosynthesis. Its function is as follows. Converts cobyric acid to cobinamide by the addition of aminopropanol on the F carboxylic group. This chain is Cobalamin biosynthesis protein CobD, found in Stutzerimonas stutzeri (strain A1501) (Pseudomonas stutzeri).